A 345-amino-acid chain; its full sequence is Serpentine receptor class beta-5 (345 aa).

Residues 1-22 lie on the Extracellular side of the membrane; it reads MAEINQTKCDLAFQISYHPIYR. N-linked (GlcNAc...) asparagine glycosylation occurs at Asn5. A helical transmembrane segment spans residues 23–43; that stretch reads LAQFWTLSVSLLAVPSLLYFL. At 44-57 the chain is on the cytoplasmic side; sequence LKRVLLLPFHGNLK. A helical transmembrane segment spans residues 58 to 78; sequence CLLITYFSSIFLYALVLCFDF. The Extracellular segment spans residues 79-103; that stretch reads SYQCLIPFIVTTKCSLIIDQTLYKC. A helical transmembrane segment spans residues 104-124; that stretch reads GHMTSLFFLTTPMLLPFGFSI. Residues 125 to 142 are Cytoplasmic-facing; it reads ERFVAVGMAYKYEKMRTL. The chain crosses the membrane as a helical span at residues 143-163; that stretch reads LGPILCFILVAPNFVVFYFLF. The Extracellular portion of the chain corresponds to 164 to 189; sequence RDEQFTDSFISFLVLPNTPAVQFNNY. The helical transmembrane segment at 190–210 threads the bilayer; it reads LWFLLYAKIGNFCCNCVLLIF. At 211-241 the chain is on the cytoplasmic side; that stretch reads HKRFKNTYLKKKTSLSVRYALEEISNSSKFT. Residues 242–262 form a helical membrane-spanning segment; it reads LILTFTHLVFFGAYTIGSILV. Residues 263 to 280 lie on the Extracellular side of the membrane; that stretch reads RTLGESFFGNFLNFYVAR. The chain crosses the membrane as a helical span at residues 281–301; that stretch reads GVNCAVPTYNLLIAFVGLISL. The Cytoplasmic segment spans residues 302 to 345; sequence RQLNSRRHAKILTKVLIRVTGQEGARNYDDIIMQQWNTVSNRTR.

It belongs to the nematode receptor-like protein srb family. Expressed throughout the head.

It localises to the cell membrane. Its subcellular location is the perikaryon. It is found in the cell projection. The protein resides in the dendrite. In terms of biological role, G-protein coupled receptor. Plays a role in the navigational capacity of sperm and promotes the targeting of sperm derived from males to the fertilization site in the uterus of hermaphrodites. This Caenorhabditis elegans protein is Serpentine receptor class beta-5.